The sequence spans 436 residues: MPFGCLKPGEKKDYNSPTEITDKYDLGQIVKSEEFCEIFRAKDKNTLKMYTCKKFLKKDGRKVRKAAKNEIVILKMVKHPNILQLVDVYETRKEYYLFLELATGREVFDWILDQGYYSERDTSNVIRQVMEAVAYLHSLKIVHRNLKLENLVYYNRLKHSKIVISDFHLAKLENGLIKEPCGTPEYLAPEVVGRQRYGRPVDCWALGVIMYILLSGNPPFYDEADDDDYENHDKNLFRKILAGDYEFDSPYWDEISDSAKNLVSRLMEVDQDQRLTAQEAINHEWISGNAASDKNIKENVCAQIEKNFAKAKWKKAVRVTTMMKRLRAPENQTAAATAPAAEAAAASPSEADPAAGAQETPQAASEASTAPSSTAESLSASIEVPAVEPANAEAASAAVQPPAEPVVHVPEPEQPVPTSRCNGEASALDTVEEQSG.

Residues 24–286 form the Protein kinase domain; the sequence is YDLGQIVKSE…AQEAINHEWI (263 aa). The disordered stretch occupies residues 328–436; the sequence is APENQTAAAT…ALDTVEEQSG (109 aa). A compositionally biased stretch (low complexity) spans 333-409; it reads TAAATAPAAE…QPPAEPVVHV (77 aa).

This sequence belongs to the protein kinase superfamily. CAMK Ser/Thr protein kinase family. Interacts with calmodulin, in the presence of calcium. Ca(2+) is required as a cofactor.

It is found in the cytoplasmic vesicle membrane. Does not appear to have detectable kinase activity. This chain is CaM kinase-like vesicle-associated protein (camkv), found in Danio rerio (Zebrafish).